We begin with the raw amino-acid sequence, 446 residues long: DDB1- and CUL4-associated factor 12-A (446 aa).

Basic residues predominate over residues 1 to 12 (MTRRSVSRKRRA). A disordered region spans residues 1–32 (MTRRSVSRKRRANPGSGPGEQSDWDHSAHKRK). WD repeat units lie at residues 132–173 (SHQS…PVCV), 177–215 (GHNDWIFSIAWISDTMAVSGSRDGSMGLWEMTDEVVNKS), 245–284 (PVNCKVRALAFNSNNKELGAVSLDGFFHLWKAEQTLSKLL), and 333–370 (EQGSGIRSVSFYEHIVTVGTGQGALLFYDIRAQRFLED).

It belongs to the WD repeat DCAF12 family. In terms of assembly, component of the DCX(DCAF12) E3 ubiquitin ligase complex, at least composed of cul4 (cul4a or cul4b), ddb1, dcaf12 and rbx1.

It is found in the cytoplasm. It localises to the cytoskeleton. Its subcellular location is the microtubule organizing center. The protein localises to the centrosome. The protein resides in the nucleus. The protein operates within protein modification; protein ubiquitination. Substrate-recognition component of a DCX (DDB1-CUL4-X-box) E3 ubiquitin-protein ligase complex of the DesCEND (destruction via C-end degrons) pathway, which recognizes a C-degron located at the extreme C terminus of target proteins, leading to their ubiquitination and degradation. The C-degron recognized by the DesCEND pathway is usually a motif of less than ten residues and can be present in full-length proteins, truncated proteins or proteolytically cleaved forms. The DCX(DCAF12) complex specifically recognizes proteins with a diglutamate (Glu-Glu) at the C-terminus leading to their ubiquitination and degradation. Also directly recognizes the C-terminal glutamate-leucine (Glu-Leu) degron as an alternative degron in proteins leading to their ubiquitination and degradation. The polypeptide is DDB1- and CUL4-associated factor 12-A (dcaf12-a) (Xenopus laevis (African clawed frog)).